The primary structure comprises 717 residues: MDMQNITDLYKIDKKTTLYPNIINKYNYMAYLLFPNNATIFNSYITKKEVFEYPMQFAIALYPVYKLYWHNINICLNNRFIYLSNEFKNNISINTVYNLLYNNELKFEDDNIIINGKNLKISYSAYSYVTIISQITINISSLNKYQIYGIIESANYLGILSSYKQNKYFDKNLFSFTKSELRSTMIDVQLKIFEIFISKKNCIISGGTGIGKTTVIPKLFWWFNLLFDGYEFWNTSNENKNINDFIFKPNFEKNKTILSLPRKALIRQMGINYIKSLGFDNISGSPIILKYKDVKKEKEYYNNNPILYPFVLSVNRITINNIKHSNSVIIDEIHEHDKFGDIAIAIARTKKKKYNIRNIVLISATIESDIDNIRIYFKNIVEIYIPGVSLFPVKEIECEDKDVISILKNYMPSVGKSVIIFYETIKKINEYKEILESILIDKIYKIYTIHSKITNINAIINKLQNDKKHIHIILSTNYLESSITITNATLVIDNGKMYQKKFLTGSTMYITESMYIQRKGRVGRISKGTYIRTYSKDLLQTTFKHINYQYLWEYILVFKYNNMDYYNDLFIKPDDPSRIENTLNYLKNINIDIDKYISLLYSKFNKYEINMVEYLSIYINNSTSDIILLNEFIDNIRNSDKYIFPYRLTEIFHKLNVRCRCINITETEEGNINCSFVILNNYDGDPFFKLSFEKSNLICRYNKIYYIVSMSPLYLID.

The Helicase ATP-binding domain maps to 193–384; the sequence is FEIFISKKNC…IYFKNIVEIY (192 aa). 206 to 213 is a binding site for ATP; the sequence is GGTGIGKT. Residues 331 to 334 carry the DEXH box motif; that stretch reads DEIH. The region spanning 406–566 is the Helicase C-terminal domain; that stretch reads ILKNYMPSVG…VFKYNNMDYY (161 aa).

It belongs to the DEAD box helicase family. DEAH subfamily. In terms of assembly, monomer.

The protein localises to the virion. The enzyme catalyses ATP + H2O = ADP + phosphate + H(+). Its function is as follows. NTP-dependent helicase that catalyzes unidirectional unwinding of 3'tailed duplex RNAs and plays an important role during transcription of early mRNAs, presumably by preventing R-loop formation behind the elongating RNA polymerase. Might also play a role in the export of newly synthesized mRNA chains out of the core into the cytoplasm. Required for replication and propagation of viral particles. The protein is RNA helicase NPH-II (NPH2) of Melanoplus sanguinipes (Migratory grasshopper).